Reading from the N-terminus, the 405-residue chain is GTPase Obg (405 aa).

An Obg domain is found at 1-159 (MRFIDEAVVT…KVLKFELKVV (159 aa)). The OBG-type G domain occupies 160-333 (ADVGLIGLPN…IKYHLMNEIE (174 aa)). GTP-binding positions include 166–173 (GLPNAGKS), 191–195 (FTTLV), 213–216 (DIPG), 283–286 (NKID), and 314–316 (ATL). Residues S173 and T193 each contribute to the Mg(2+) site. A compositionally biased stretch (basic and acidic residues) spans 371–382 (YRAARKAAREGT). Residues 371-405 (YRAARKAAREGTDLSDDDFDGSDDDDDGVEVIYAP) form a disordered region. Acidic residues predominate over residues 383–399 (DLSDDDFDGSDDDDDGV).

The protein belongs to the TRAFAC class OBG-HflX-like GTPase superfamily. OBG GTPase family. As to quaternary structure, monomer. It depends on Mg(2+) as a cofactor.

The protein resides in the cytoplasm. In terms of biological role, an essential GTPase which binds GTP, GDP and possibly (p)ppGpp with moderate affinity, with high nucleotide exchange rates and a fairly low GTP hydrolysis rate. Plays a role in control of the cell cycle, stress response, ribosome biogenesis and in those bacteria that undergo differentiation, in morphogenesis control. This chain is GTPase Obg, found in Psychrobacter arcticus (strain DSM 17307 / VKM B-2377 / 273-4).